Consider the following 250-residue polypeptide: DNA repair protein RecO (250 aa).

This sequence belongs to the RecO family.

Involved in DNA repair and RecF pathway recombination. The sequence is that of DNA repair protein RecO from Rhodospirillum centenum (strain ATCC 51521 / SW).